The following is a 92-amino-acid chain: UPF0473 protein Cbei_1107 (92 aa).

This sequence belongs to the UPF0473 family.

The chain is UPF0473 protein Cbei_1107 from Clostridium beijerinckii (strain ATCC 51743 / NCIMB 8052) (Clostridium acetobutylicum).